Consider the following 623-residue polypeptide: Set1/Ash2 histone methyltransferase complex subunit ASH2 (623 aa).

Residues 1-18 (MAAAGAGPGPGVSAGPGP) are compositionally biased toward gly residues. The PHD-type; atypical zinc-finger motif lies at 1–62 (MAAAGAGPGP…SGEAESGDAN (62 aa)). Residues 1 to 99 (MAAAGAGPGP…MDTQAGSVDE (99 aa)) form a disordered region. Low complexity predominate over residues 36–56 (AAGAGEGPSAAPGAEPSSGEA). The tract at residues 63 to 172 (LVDVSGLETE…MCLSALANLT (110 aa)) is DNA-binding. Residues 84–95 (GDTSEVMDTQAG) show a composition bias toward polar residues. Serine 96 carries the phosphoserine modification. Residues 112–145 (CGICTKWFTADTFGIDTSSCLPFMTNYSFHCNVC) form a C4-type zinc finger. Positions 230–247 (LVKEHPDPGSKDPEEDYP) are enriched in basic and acidic residues. The segment at 230–326 (LVKEHPDPGS…AQRLPPHGYP (97 aa)) is disordered. The span at 265 to 277 (NQKQSSAVSASGN) shows a compositional bias: polar residues. The span at 278-290 (LNGGIAAGSSGKG) shows a compositional bias: gly residues. Residue arginine 291 is modified to Asymmetric dimethylarginine; by PRMT1 and PRMT5. Position 311 is a phosphoserine (serine 311). An interaction with RBBP5 region spans residues 311–623 (SDPLFSAQRL…DGRRSPPWEP (313 aa)). A B30.2/SPRY domain is found at 355–578 (LDCWAGKPIP…VSINFGPSFK (224 aa)).

In terms of assembly, interacts with HCFC1. Core component of several methyltransferase-containing complexes including MLL1/MLL, MLL2/3 (also named ASCOM complex) and MLL4/WBP7. Each complex is at least composed of ASH2L, RBBP5, WDR5, DPY30, one or more specific histone methyltransferases (KMT2A/MLL1, KMT2D/MLL2, KMT2C/MLL3 and KMT2B/MLL4), and the facultative components PAGR1, BACC1, CHD8, E2F6, HCFC1, HCFC2, HSP70, INO80C, KDM6A, KANSL1, LAS1L, MAX, MCRS1, MEN1, MGA, KAT8/MOF, NCOA6, PAXIP1/PTIP, PELP1, PHF20, PRP31, RING2, RUVB1/TIP49A, RUVB2/TIP49B, SENP3, TAF1, TAF4, TAF6, TAF7, TAF9, TEX10 and alpha- and beta-tubulin. Component of the SET1 complex, at least composed of the catalytic subunit (SETD1A or SETD1B), WDR5, WDR82, RBBP5, ASH2L/ASH2, CXXC1/CFP1, HCFC1 and DPY30. Found in a complex with RBBP5, ASH2L, DPY30, KMT2A, KMT2D and WDR5. Component of a histone methylation complex composed of at least ZNF335, RBBP5, ASH2L and WDR5; the complex may have histone H3-specific methyltransferase activity, however does not have specificity for 'Lys-4' of histone H3. Within the complex, interacts with ZNF335. Interacts with RBBP5. Components of this complex may associate with components of a nuclear receptor-mediated transcription complex to form a complex at least composed of ZNF335, HCFC1, CCAR2, EMSY, MKI67, RBBP5, ASH2L and WDR5. Within this complex also interacts with CCAR2 and EMSY. Interacts with DPY30. Interacts with SETD1A and SETD1B. In terms of processing, both monomethylated and dimethylated on arginine residues in the C-terminus. Arg-291 is the major site. Methylation is not required for nuclear localization, nor for MLL complex integrity or maintenance of global histone H3K4me3 levels. In terms of tissue distribution, ubiquitously expressed, with abundant expression in the heart, skeletal muscle and kidney. Low expression is seen in spleen, lung and testis.

It is found in the nucleus. Its function is as follows. Transcriptional regulator. Component or associated component of some histone methyltransferase complexes which regulates transcription through recruitment of those complexes to gene promoters. Component of the Set1/Ash2 histone methyltransferase (HMT) complex, a complex that specifically methylates 'Lys-4' of histone H3, but not if the neighboring 'Lys-9' residue is already methylated. As part of the MLL1/MLL complex it is involved in methylation and dimethylation at 'Lys-4' of histone H3. May play a role in hematopoiesis. In association with RBBP5 and WDR5, stimulates the histone methyltransferase activities of KMT2A, KMT2B, KMT2C, KMT2D, SETD1A and SETD1B. The sequence is that of Set1/Ash2 histone methyltransferase complex subunit ASH2 (Ash2l) from Mus musculus (Mouse).